We begin with the raw amino-acid sequence, 144 residues long: L-fucose mutarotase (144 aa).

Histidine 22 serves as the catalytic Proton donor. Substrate contacts are provided by residues aspartate 30, arginine 109, and 131-133 (YGN).

It belongs to the RbsD / FucU family. FucU mutarotase subfamily. In terms of assembly, homodecamer.

It localises to the cytoplasm. The catalysed reaction is alpha-L-fucose = beta-L-fucose. Its pathway is carbohydrate metabolism; L-fucose metabolism. Functionally, involved in the anomeric conversion of L-fucose. This chain is L-fucose mutarotase, found in Haemophilus influenzae (strain PittGG).